A 453-amino-acid polypeptide reads, in one-letter code: Ribosomal protein uS12 methylthiotransferase RimO (453 aa).

One can recognise an MTTase N-terminal domain in the interval 5-120 (PKVGFVSLGC…VMQAVHSHLP (116 aa)). 6 residues coordinate [4Fe-4S] cluster: Cys-14, Cys-50, Cys-79, Cys-151, Cys-155, and Cys-158. The Radical SAM core domain occupies 137-382 (LTPRHYAYLK…MEVAEEVSAN (246 aa)). Residues 385–453 (QRKVGKTLKV…ADGHDLWGEV (69 aa)) form the TRAM domain.

Belongs to the methylthiotransferase family. RimO subfamily. [4Fe-4S] cluster is required as a cofactor.

The protein localises to the cytoplasm. The catalysed reaction is L-aspartate(89)-[ribosomal protein uS12]-hydrogen + (sulfur carrier)-SH + AH2 + 2 S-adenosyl-L-methionine = 3-methylsulfanyl-L-aspartate(89)-[ribosomal protein uS12]-hydrogen + (sulfur carrier)-H + 5'-deoxyadenosine + L-methionine + A + S-adenosyl-L-homocysteine + 2 H(+). Catalyzes the methylthiolation of an aspartic acid residue of ribosomal protein uS12. In Burkholderia lata (strain ATCC 17760 / DSM 23089 / LMG 22485 / NCIMB 9086 / R18194 / 383), this protein is Ribosomal protein uS12 methylthiotransferase RimO.